The sequence spans 501 residues: Cytochrome P450 monooxygenase esdpH (501 aa).

A helical transmembrane segment spans residues 5–22 (RVGILIIGVLATATFWLC). C446 contacts heme.

This sequence belongs to the cytochrome P450 family. Requires heme as cofactor.

The protein resides in the membrane. It functions in the pathway secondary metabolite biosynthesis; terpenoid biosynthesis. Its function is as follows. Cytochrome P450 monooxygenase; part of the cluster that mediates the biosynthesis of shearones, diterpenoid pyrones (DPs) which are structurally diverse meroterpenoids consisting of a diterpene linked by a pyrone, and which may exhibit a range of bioactivities. Whitin the pathway, esdpH takes part in the molecular scaffold modification via the hydroxylation at C-6' and can transform shearone C into shearone E, shearone D into shearone F, and shearone H into shearone I, the latter being the final product of the pathway. The molecular scaffold is commonly biosynthesized by a series of enzymes including the non-reducing polyketide synthase (NR-PKS) esdpA that generates an alpha-pyrone; the prenyltransferase esdpC that attaches a geranylgeranyl pyrophosphate (GGPP) produced by the GGPP synthase (GGPPS) esdpD onto the pyrone unit; the FAD-dependent monooxygenase esdpE that converts an olefin on the diterpene unit into an epoxide; and the terpene cyclase esdpB that catalyzes the cyclization reactions to give the molecular backbone shearone A. In the modification steps, esdpF oxidizes the hydroxy group to a ketone at C-3 and esdpG then attaches hydroxy groups at both C-11 and C-12. After that, esdpI hydroxylates at C-20 and esdpH hydroxylates at C-6'. The ether bridge is generated by nucleophilic attack of the hydroxy group at C-20 to the carbonyl carbon at C-3. EsdpH can also functions prior to esdpI. The different combinations of these modification enzymes lead to the production of diverse shearone derivatives, shearone I being the end product of the pathway. The alpha-ketoglutarate-dependent dioxygenase esdpJ seems not to be involved in this pathway. The protein is Cytochrome P450 monooxygenase esdpH of Penicillium shearii (Eupenicillium shearii).